Consider the following 759-residue polypeptide: Putative ATP-dependent DNA helicase YjcD (759 aa).

Positions 68-121 are disordered; the sequence is ACEPKPSKEGKKEDDQESGVIRLPKGKAIAADPSPAVTEWHRPRSIKPGTPFVP. Basic and acidic residues predominate over residues 69–81; sequence CEPKPSKEGKKED. One can recognise a UvrD-like helicase ATP-binding domain in the interval 134–413; that stretch reads VGLNTDQLKA…IYLTANYRST (280 aa). Residues 158–163 and Arg-411 each bind ATP; that span reads GSGKTR. One can recognise a UvrD-like helicase C-terminal domain in the interval 414–676; sequence HPIVSSADIV…QLMTIHRSKG (263 aa).

Belongs to the helicase family. UvrD subfamily.

The protein localises to the cytoplasm. It carries out the reaction Couples ATP hydrolysis with the unwinding of duplex DNA by translocating in the 3'-5' direction.. The catalysed reaction is ATP + H2O = ADP + phosphate + H(+). May be involved in the generation of recombinogenic substrates for the subsequent action of RecA. This is Putative ATP-dependent DNA helicase YjcD (yjcD) from Bacillus subtilis (strain 168).